We begin with the raw amino-acid sequence, 210 residues long: Thymidylate kinase (210 aa).

11-18 provides a ligand contact to ATP; it reads GLEGAGKS.

This sequence belongs to the thymidylate kinase family.

The enzyme catalyses dTMP + ATP = dTDP + ADP. Its function is as follows. Phosphorylation of dTMP to form dTDP in both de novo and salvage pathways of dTTP synthesis. The chain is Thymidylate kinase from Vibrio parahaemolyticus serotype O3:K6 (strain RIMD 2210633).